A 70-amino-acid chain; its full sequence is DNA-directed RNA polymerase subunit epsilon (70 aa).

This sequence belongs to the RNA polymerase subunit epsilon family. As to quaternary structure, RNAP is composed of a core of 2 alpha, a beta and a beta' subunit. The core is associated with a delta subunit, and at least one of epsilon or omega. When a sigma factor is associated with the core the holoenzyme is formed, which can initiate transcription.

The enzyme catalyses RNA(n) + a ribonucleoside 5'-triphosphate = RNA(n+1) + diphosphate. Its function is as follows. A non-essential component of RNA polymerase (RNAP). The polypeptide is DNA-directed RNA polymerase subunit epsilon (Bacillus cereus (strain ZK / E33L)).